A 465-amino-acid chain; its full sequence is uncharacterized protein (465 aa).

Disordered regions lie at residues 95–173, 407–426, and 443–465; these read STST…RKDP, QEME…KSDK, and ANPI…SSKK. Residues 118 to 137 show a composition bias toward basic residues; that stretch reads KTGSKKVTRSKKSKKTKRRS. The span at 138-150 shows a compositional bias: low complexity; the sequence is STTVTTTTISNSK. A compositionally biased stretch (basic and acidic residues) spans 153 to 173; the sequence is TPDKDKDSKDQRKQRTKRKDP. The span at 451-465 shows a compositional bias: basic residues; sequence MARRNRRSKGSSSKK.

This is an uncharacterized protein from Caenorhabditis elegans.